A 327-amino-acid chain; its full sequence is Zinc transport protein ZntB (327 aa).

The Cytoplasmic segment spans residues 1–273 (MEAIKGSDVN…ARRTYTMSLM (273 aa)). A helical transmembrane segment spans residues 274–294 (AMVFLPSTFLTGLFGVNLGGI). Residues 295–300 (PGGGWQ) lie on the Periplasmic side of the membrane. Residues 301–321 (FGFSIFCILLVVLIGGVALWL) traverse the membrane as a helical segment. The Cytoplasmic segment spans residues 322–327 (HRSKWL).

Belongs to the CorA metal ion transporter (MIT) (TC 1.A.35) family.

The protein localises to the cell inner membrane. It catalyses the reaction Zn(2+)(out) + H(+)(out) = Zn(2+)(in) + H(+)(in). In terms of biological role, zinc transporter. Acts as a Zn(2+):proton symporter, which likely mediates zinc ion uptake. This Escherichia coli O8 (strain IAI1) protein is Zinc transport protein ZntB.